The chain runs to 263 residues: Acyl-[acyl-carrier-protein]--UDP-N-acetylglucosamine O-acyltransferase (263 aa).

This sequence belongs to the transferase hexapeptide repeat family. LpxA subfamily. In terms of assembly, homotrimer.

It localises to the cytoplasm. The enzyme catalyses a (3R)-hydroxyacyl-[ACP] + UDP-N-acetyl-alpha-D-glucosamine = a UDP-3-O-[(3R)-3-hydroxyacyl]-N-acetyl-alpha-D-glucosamine + holo-[ACP]. Its pathway is glycolipid biosynthesis; lipid IV(A) biosynthesis; lipid IV(A) from (3R)-3-hydroxytetradecanoyl-[acyl-carrier-protein] and UDP-N-acetyl-alpha-D-glucosamine: step 1/6. Involved in the biosynthesis of lipid A, a phosphorylated glycolipid that anchors the lipopolysaccharide to the outer membrane of the cell. The sequence is that of Acyl-[acyl-carrier-protein]--UDP-N-acetylglucosamine O-acyltransferase from Campylobacter jejuni subsp. jejuni serotype O:23/36 (strain 81-176).